Reading from the N-terminus, the 330-residue chain is Phospholipase C (330 aa).

Residues 1-34 form the signal peptide; sequence MVKKTKSNSLKKVATLALANLLLVGALTDNSAKA. A disulfide bridge links C155 with C191.

It belongs to the neutral sphingomyelinase family. As to quaternary structure, monomer.

Its subcellular location is the secreted. It carries out the reaction a 1,2-diacyl-sn-glycero-3-phosphocholine + H2O = phosphocholine + a 1,2-diacyl-sn-glycerol + H(+). Its function is as follows. Bacterial hemolysins are exotoxins that attack blood cell membranes and cause cell rupture. Beta-hemolysin is a phospholipase C with specific activity toward sphingomyelins. Has a high specificity for sphingomyelin, hydrolyzes lysophosphatidylcholine at a much lower rate, but has no activity towards phosphatidylcholine, phosphatidylethanolamine, or phosphatidylserine. The polypeptide is Phospholipase C (hlb) (Staphylococcus aureus (strain NCTC 8325 / PS 47)).